Consider the following 336-residue polypeptide: Spore photoproduct lyase (336 aa).

The Radical SAM core domain occupies 74–305; sequence CKPSANYQLP…KFGQFGYGKY (232 aa). [4Fe-4S] cluster contacts are provided by C88, C92, and C95. Residues 215–232 constitute a DNA-binding region (H-T-H motif); that stretch reads ESAYNILNSGYKTGFIVG.

Belongs to the radical SAM superfamily. SPL family. As to quaternary structure, monomer or homodimer. [4Fe-4S] cluster is required as a cofactor. It depends on S-adenosyl-L-methionine as a cofactor.

It carries out the reaction (5R)-5,6-dihydro-5-(thymidin-7-yl)thymidine in DNA = a thymidine dimer in DNA. In terms of biological role, involved in repair of UV radiation-induced DNA damage during spore germination. Can repair thymine dimer 5-thyminyl-5,6-dihydrothymine (known as spore photoproduct (SP)) by in situ monomerization of SP to two thymines. The sequence is that of Spore photoproduct lyase (splB) from Clostridium acetobutylicum (strain ATCC 824 / DSM 792 / JCM 1419 / IAM 19013 / LMG 5710 / NBRC 13948 / NRRL B-527 / VKM B-1787 / 2291 / W).